Here is a 1041-residue protein sequence, read N- to C-terminus: RAS protein activator like-3 (1041 aa).

The interval 1–59 is disordered; that stretch reads MKPECGQTMFRTFWSRSRDSSAMDPPLQSEEDSQTQPSLPSPLTSYRWHTGGSGEKAAG. Positions 34-44 are enriched in polar residues; sequence QTQPSLPSPLT. Ser41, Ser74, Ser187, Ser189, Ser190, Ser193, Ser239, Ser252, Ser256, and Ser259 each carry phosphoserine. Residues 218 to 243 are a coiled coil; the sequence is SNQVHNVRKLLKRLKEKKRAKSELGA. Positions 220 to 321 constitute a PH domain; that stretch reads QVHNVRKLLK…WIEDLRRQFQ (102 aa). Positions 234 to 256 are disordered; that stretch reads KKRAKSELGAYTPRDGPPSALGS. Thr262 is subject to Phosphothreonine. The 119-residue stretch at 312–430 folds into the C2 domain; sequence WIEDLRRQFQ…APAAGLERWF (119 aa). The Ras-GAP domain maps to 500-708; sequence GRAQALVTDL…PAMQHFLDQV (209 aa). The segment at 790–910 is disordered; it reads GEKPGFLAPR…PGDRYQTTGT (121 aa). Phosphoserine is present on residues Ser813 and Ser816. The segment covering 850 to 866 has biased composition (basic residues); the sequence is RPTHRRPSAGSKPRPKG. A coiled-coil region spans residues 931–1013; that stretch reads QKALSLLVES…LRDSLQSLQL (83 aa). The interval 1016–1041 is disordered; sequence KTPGSRSQPLPLKAPCVNGADLSMGT.

Predominantly expressed in hematopoietic tissues.

It localises to the cytoplasm. It is found in the cell cortex. Functions as a Ras GTPase-activating protein. Plays an important role in the expansion and functions of natural killer T (NKT) cells in the liver by negatively regulating RAS activity and the down-stream ERK signaling pathway. The protein is RAS protein activator like-3 (Rasal3) of Mus musculus (Mouse).